Here is a 371-residue protein sequence, read N- to C-terminus: uncharacterized protein (371 aa).

Residue histidine 76 participates in Zn(2+) binding. Aspartate 78 is an active-site residue. Aspartate 106 provides a ligand contact to Zn(2+). The active-site Proton acceptor is glutamate 139. Residues glutamate 140, aspartate 163, and histidine 344 each coordinate Zn(2+).

It belongs to the peptidase M20A family. Zn(2+) serves as cofactor.

Functionally, could be a peptidase. This is an uncharacterized protein from Bacillus subtilis (strain 168).